The following is a 793-amino-acid chain: Toll-like receptor 6 (793 aa).

The N-terminal stretch at 1-23 is a signal peptide; sequence MIKDKESPIRSCHFVYIVALVFG. Over 24–584 the chain is Extracellular; the sequence is TIIQFSDESE…FQVSELSCNT (561 aa). 19 LRR repeats span residues 54–77, 78–101, 102–122, 123–147, 148–168, 169–196, 197–219, 220–250, 251–277, 278–303, 304–330, 331–354, 355–378, 379–404, 405–428, 429–449, 450–473, 474–495, and 496–519; these read TKVLDLSQNNISELHLSDISFLSG, LRVLRLSHNRIQGLDISIFKFNHD, LEYLDLSHNQLQKISCHPITT, TLKHLDLSFNDFDALPICKEFGNLT, QLNFLGLSATKLQQLDLLPIA, HLHLSCILLDLEDYMKENKKESLQILNT, KKLHLVFHPNSFFSVQVDISANS, LGCLQLTNIKLNDYNCQVLLKFLSGLTGGPT, LLNFTLNHVETTWKCLVKVFQFLWPKP, IEYLNIYNLTIVESIDEEVFTYYKTT, LKALKIEHITNKVFIFSQTALYTVFSE, MNILMLTISDTRFIHMLCPQEPST, FKFLNFTQNSFTDSVFQNCDTLAR, LETLILQKNELKDLFKTSLMTKDMLS, LETLDVSWNSLEYDRSNGNCSWVG, SIVVLNLSSNALTDSVFRCLP, PRIKVLDLHNNRIRSIPKDVTGLE, TLQELNLASNSLAHLPGCGIFS, and SLSILIIEHNSISNPSADFFQSCQ. N63 is a glycosylation site (N-linked (GlcNAc...) asparagine). C117 and C140 are oxidised to a cystine. N145 carries N-linked (GlcNAc...) asparagine glycosylation. A disulfide bridge links C235 with C265. 2 N-linked (GlcNAc...) asparagine glycosylation sites follow: N253 and N285. C348 and C373 are joined by a disulfide. N359 carries an N-linked (GlcNAc...) asparagine glycan. Residues N423 and N434 are each glycosylated (N-linked (GlcNAc...) asparagine). Residues C424 and C447 are joined by a disulfide bond. The LRRCT domain occupies 520–575; sequence KIRSLKAGNNPFQCSCELRDFIQSVGQVSSDVVEGWPESYKCDYPESYKGTPLKDF. A helical membrane pass occupies residues 585–605; that stretch reads ALLIITIVVPGLVLAVAVTVL. Residues 606–793 lie on the Cytoplasmic side of the membrane; the sequence is CIYLDLPWYL…KLMEKAAEIH (188 aa). Positions 640 to 781 constitute a TIR domain; the sequence is LQFHAFISYS…LFWANLRASI (142 aa).

This sequence belongs to the Toll-like receptor family. Homodimer (via cytoplasmic TIR domain). Heterodimer with TLR2 via their respective extracellular domains. Binds MYD88 via their respective TIR domains. Interacts with CD36, following CD36 stimulation by oxLDL or amyloid-beta 42, and forms a heterodimer with TLR4. The trimeric complex is internalized and triggers inflammatory response. LYN kinase activity facilitates TLR4-TLR6 heterodimerization and signal initiation. The heterodimer TLR2:TLR6 interacts with CD14 and CD36 in response to triacylated lipopeptides. As to expression, highest expression levels seen in blood and lymph node, intermediate expression seen in spleen and lowest expression seen in the liver, lung and udder cistern.

The protein resides in the cell membrane. The protein localises to the cytoplasmic vesicle. It is found in the phagosome membrane. Its subcellular location is the membrane raft. It localises to the golgi apparatus. Functionally, participates in the innate immune response to Gram-positive bacteria and fungi. Specifically recognizes diacylated and, to a lesser extent, triacylated lipopeptides. In response to diacylated lipopeptides, forms the activation cluster TLR2:TLR6:CD14:CD36, this cluster triggers signaling from the cell surface and subsequently is targeted to the Golgi in a lipid-raft dependent pathway. Acts via MYD88 and TRAF6, leading to NF-kappa-B activation, cytokine secretion and the inflammatory response. Recognizes mycoplasmal macrophage-activating lipopeptide-2kD (MALP-2), soluble tuberculosis factor (STF), phenol-soluble modulin (PSM) and B.burgdorferi outer surface protein A lipoprotein (OspA-L) cooperatively with TLR2. In complex with TLR4, promotes sterile inflammation in monocytes/macrophages in response to oxidized low-density lipoprotein (oxLDL) or amyloid-beta 42. In this context, the initial signal is provided by oxLDL- or amyloid-beta 42-binding to CD36. This event induces the formation of a heterodimer of TLR4 and TLR6, which is rapidly internalized and triggers inflammatory response, leading to the NF-kappa-B-dependent production of CXCL1, CXCL2 and CCL9 cytokines, via MYD88 signaling pathway, and CCL5 cytokine, via TICAM1 signaling pathway, as well as IL1B secretion. This Bos taurus (Bovine) protein is Toll-like receptor 6.